Reading from the N-terminus, the 290-residue chain is Cilia- and flagella-associated protein 298 (290 aa).

The protein belongs to the CFAP298 family. As to quaternary structure, interacts with ZMYND10.

It localises to the cytoplasm. The protein localises to the cytoskeleton. Its subcellular location is the cilium basal body. Plays a role in motile cilium function, possibly by acting on outer dynein arm assembly. Seems to be important for initiation rather than maintenance of cilium motility. Required for correct positioning of cilia at the apical cell surface, suggesting an additional role in the planar cell polarity (PCP) pathway. May suppress canonical Wnt signaling activity. The protein is Cilia- and flagella-associated protein 298 of Mus musculus (Mouse).